We begin with the raw amino-acid sequence, 780 residues long: Putative ABC transporter ATP-binding protein BL0043 (780 aa).

ABC transporter domains lie at 2-238 (LKDI…QSET) and 282-531 (IRVS…GPAH). ATP is bound at residue 34 to 41 (GPNGSGKS). The tract at residues 230-272 (AEAVSQSETEGSIGTEAAPSRPTNDSPRQREREDGSELPLLSD) is disordered. 316–323 (GVNGSGKS) serves as a coordination point for ATP. 4 consecutive transmembrane segments (helical) span residues 551–573 (FTMF…LAVI), 586–608 (SIHP…VRTG), 623–645 (GVTI…AVFL), and 759–778 (IAAR…AAII).

It belongs to the ABC transporter superfamily.

The protein localises to the cell membrane. Probably part of an ABC transporter complex. Responsible for energy coupling to the transport system. The chain is Putative ABC transporter ATP-binding protein BL0043 from Bifidobacterium longum (strain NCC 2705).